The primary structure comprises 526 residues: Butyrophilin subfamily 1 member A1 (526 aa).

Positions 1–26 (MAVFPNSCLAGCLLIFILLQLPKLDS) are cleaved as a signal peptide. 2 consecutive Ig-like V-type domains span residues 27-140 (APFD…VHLK) and 148-234 (PHIS…VEVS). The Extracellular segment spans residues 27–242 (APFDVIGPQE…VSIPASFFPR (216 aa)). 2 cysteine pairs are disulfide-bonded: Cys-50–Cys-124 and Cys-164–Cys-218. Asn-55 carries an N-linked (GlcNAc...) (complex) asparagine glycan. Asn-215 carries N-linked (GlcNAc...) (hybrid) asparagine glycosylation. The helical transmembrane segment at 243–269 (LTPWMVAVAVILVVLGLLTIGSIFFTW) threads the bilayer. Over 270-526 (RLYKERSRQR…IPLQPSQGVP (257 aa)) the chain is Cytoplasmic. A B30.2/SPRY domain is found at 285 to 479 (SKEKLLEELK…LTICPVTDGL (195 aa)).

Belongs to the immunoglobulin superfamily. BTN/MOG family. As to quaternary structure, seems to associate with xanthine dehydrogenase/oxidase. In terms of tissue distribution, expressed in mammary tissue.

It localises to the membrane. Functionally, may function in the secretion of milk-fat droplets. May act as a specific membrane-associated receptor for the association of cytoplasmic droplets with the apical plasma membrane. Inhibits the proliferation of CD4 and CD8 T-cells activated by anti-CD3 antibodies, T-cell metabolism and IL2 and IFNG secretion. In Bos taurus (Bovine), this protein is Butyrophilin subfamily 1 member A1 (BTN1A1).